We begin with the raw amino-acid sequence, 799 residues long: High affinity nerve growth factor receptor (799 aa).

A signal peptide spans 1–32; the sequence is MLRGQRHGQLGWHRPAAGLGGLVTSLMLACAC. Topologically, residues 33–418 are extracellular; sequence AASCRETCCP…DPVEKKDETP (386 aa). 2 disulfide bridges follow: Cys36/Cys41 and Cys40/Cys50. An N-linked (GlcNAc...) asparagine glycan is attached at Asn67. LRR repeat units lie at residues 90-113 and 116-137; these read LGELRSLTIVKSGLRFVAPDAFHF and RLSHLNLSSNALESLSWKTVQG. Asn121, Asn190, Asn204, Asn255, Asn264, Asn320, Asn325, Asn341, Asn361, and Asn404 each carry an N-linked (GlcNAc...) asparagine glycan. Positions 148 to 219 constitute an LRRCT domain; the sequence is NPLHCSCALL…GDDVFLQCQV (72 aa). The cysteines at positions 154 and 193 are disulfide-linked. 2 consecutive Ig-like C2-type domains span residues 196–285 and 295–368; these read PSVK…VSVS and AVEQ…LAAN. 2 cysteine pairs are disulfide-bonded: Cys217–Cys267 and Cys302–Cys348. The chain crosses the membrane as a helical span at residues 419 to 442; the sequence is FGVSVAVGLAVSAALFLSALLLVL. At 443-799 the chain is on the cytoplasmic side; that stretch reads NKCGQRSKFG…APPSYLDVLG (357 aa). An interaction with SQSTM1 region spans residues 472–493; sequence MTLGGSSLSPTEGKGSGLQGHI. The residue at position 499 (Tyr499) is a Phosphotyrosine; by autocatalysis. A Protein kinase domain is found at 513-784; that stretch reads IILKWELGEG…LSMKDVHARL (272 aa). ATP contacts are provided by residues 519 to 527 and Lys547; that span reads LGEGAFGKV. Asp653 serves as the catalytic Proton acceptor. Phosphotyrosine; by autocatalysis occurs at positions 679, 683, 684, and 794.

The protein belongs to the protein kinase superfamily. Tyr protein kinase family. Insulin receptor subfamily. Exists in a dynamic equilibrium between monomeric (low affinity) and dimeric (high affinity) structures. Homodimerization is induced by binding of a NGF dimer. Found in a complex, at least composed of KIDINS220, MAGI2, NTRK1 and RAPGEF2; the complex is mainly formed at late endosomes in a nerve growth factor (NGF)-dependent manner. Interacts with RAPGEF2; the interaction is strengthened after NGF stimulation. Interacts with SQSTM1; bridges NTRK1 to NGFR. Forms a ternary complex with NGFR and KIDINS220; this complex is affected by the expression levels of KIDINS220 and an increase in KIDINS220 expression leads to a decreased association of NGFR and NTRK1. Interacts (phosphorylated upon activation by NGF) with SHC1; mediates SHC1 phosphorylation and activation. Interacts (phosphorylated upon activation by NGF) with PLCG1; mediates PLCG1 phosphorylation and activation. Interacts (phosphorylated) with SH2B1 and SH2B2. Interacts with GRB2. Interacts with PIK3R1. Interacts with FRS2. Interacts with SORT1; may regulate NTRK1 anterograde axonal transport. Interacts with SH2D1A; regulates NTRK1. Interacts with NRADD. Interacts with RAB7A. Interacts with PTPRS. Interacts with USP36; USP36 does not deubiquitinate NTRK1. Interacts with GGA3. Interacts with TSPAN1; this interaction promotes NTRK1 stability. Post-translationally, ligand-mediated autophosphorylation. Interaction with SQSTM1 is phosphotyrosine-dependent. Autophosphorylation at Tyr-499 mediates interaction and phosphorylation of SHC1. N-glycosylated. In terms of processing, ubiquitinated. Undergoes polyubiquitination upon activation; regulated by NGFR. Ubiquitination by NEDD4L leads to degradation. Ubiquitination regulates the internalization of the receptor. As to expression, isoform Trka-II is primarily expressed in neuronal cells; isoform Trka-I is found in non-neuronal tissues.

It localises to the cell membrane. It is found in the early endosome membrane. The protein localises to the late endosome membrane. The protein resides in the recycling endosome membrane. It carries out the reaction L-tyrosyl-[protein] + ATP = O-phospho-L-tyrosyl-[protein] + ADP + H(+). Its activity is regulated as follows. The pro-survival signaling effect of NTRK1 in neurons requires its endocytosis into signaling early endosomes and its retrograde axonal transport. This is regulated by different proteins including CFL1, RAC1 and SORT1. NTF3 is unable to induce this signaling probably due to the lability of the NTF3-NTRK1 complex in endosomes. SH2D1A inhibits the autophosphorylation of the receptor, and alters the recruitment and activation of downstream effectors and signaling cascades. Regulated by NGFR. In terms of biological role, receptor tyrosine kinase involved in the development and the maturation of the central and peripheral nervous systems through regulation of proliferation, differentiation and survival of sympathetic and nervous neurons. High affinity receptor for NGF which is its primary ligand. Can also bind and be activated by NTF3/neurotrophin-3. However, NTF3 only supports axonal extension through NTRK1 but has no effect on neuron survival. Upon dimeric NGF ligand-binding, undergoes homodimerization, autophosphorylation and activation. Recruits, phosphorylates and/or activates several downstream effectors including SHC1, FRS2, SH2B1, SH2B2 and PLCG1 that regulate distinct overlapping signaling cascades driving cell survival and differentiation. Through SHC1 and FRS2 activates a GRB2-Ras-MAPK cascade that regulates cell differentiation and survival. Through PLCG1 controls NF-Kappa-B activation and the transcription of genes involved in cell survival. Through SHC1 and SH2B1 controls a Ras-PI3 kinase-AKT1 signaling cascade that is also regulating survival. In absence of ligand and activation, may promote cell death, making the survival of neurons dependent on trophic factors. In Rattus norvegicus (Rat), this protein is High affinity nerve growth factor receptor (Ntrk1).